Consider the following 368-residue polypeptide: UPF0284 protein SYNPCC7002_A1742 (368 aa).

The protein belongs to the UPF0284 family.

This Picosynechococcus sp. (strain ATCC 27264 / PCC 7002 / PR-6) (Agmenellum quadruplicatum) protein is UPF0284 protein SYNPCC7002_A1742.